The primary structure comprises 450 residues: Chromosomal replication initiator protein DnaA 2 (450 aa).

The interval 1-87 (MLTCNECTTW…LEFVVAEHKK (87 aa)) is domain I, interacts with DnaA modulators. The tract at residues 87–114 (KPSAPVASQKESNEGISEVFEETKDFEL) is domain II. Residues 115-330 (KLNLSYRFDN…GAINKLTAYC (216 aa)) form a domain III, AAA+ region region. Positions 159, 161, 162, and 163 each coordinate ATP. The interval 331–450 (RLFGKSLTET…VNLCKNHIVG (120 aa)) is domain IV, binds dsDNA.

This sequence belongs to the DnaA family. As to quaternary structure, oligomerizes as a right-handed, spiral filament on DNA at oriC.

It is found in the cytoplasm. Its function is as follows. Plays an essential role in the initiation and regulation of chromosomal replication. ATP-DnaA binds to the origin of replication (oriC) to initiate formation of the DNA replication initiation complex once per cell cycle. Binds the DnaA box (a 9 base pair repeat at the origin) and separates the double-stranded (ds)DNA. Forms a right-handed helical filament on oriC DNA; dsDNA binds to the exterior of the filament while single-stranded (ss)DNA is stabiized in the filament's interior. The ATP-DnaA-oriC complex binds and stabilizes one strand of the AT-rich DNA unwinding element (DUE), permitting loading of DNA polymerase. After initiation quickly degrades to an ADP-DnaA complex that is not apt for DNA replication. Binds acidic phospholipids. The chain is Chromosomal replication initiator protein DnaA 2 from Chlamydia pneumoniae (Chlamydophila pneumoniae).